A 397-amino-acid polypeptide reads, in one-letter code: Staphyloferrin A transporter (397 aa).

Transmembrane regions (helical) follow at residues 10–30 (FLLFLGNWIGQIGLNWFVLTT), 39–59 (IVNFCRLVPILLLSVWAGAIA), 67–87 (LLRITISSSFLVTAILCVLTY), 93–110 (PISVIIIYATLRGILSAV), 137–157 (FIINICRSIGPAIAGVILAVY), 162–182 (TFLAQAICYFIAVLLCLPLHF), 213–233 (IFITSLLIMATGFSYTTLLPV), 245–265 (IFGIAMTMCAIGGIIATLVLP), 271–292 (IGMVNMYYLSSFLFGIALLGVV), 296–313 (IVIMFICITLIGLFSQWA), 333–353 (VLSIIMMDRGMIPLGSLLMSI), and 358–378 (FGIVRTFSIMGISTICITMVF).

Belongs to the major facilitator superfamily.

Its subcellular location is the cell membrane. Involved in staphyloferrin A secretion. The protein is Staphyloferrin A transporter of Staphylococcus aureus (strain NCTC 8325 / PS 47).